We begin with the raw amino-acid sequence, 242 residues long: Putative serine/threonine-protein kinase (242 aa).

The 194-residue stretch at 49 to 242 folds into the Protein kinase domain; the sequence is FSSKNKVGEG…KSDVYSFGVL (194 aa). ATP is bound by residues 55-63 and Lys77; that span reads VGEGGCGAV. The active-site Proton acceptor is Asp177.

Belongs to the protein kinase superfamily. Ser/Thr protein kinase family.

The enzyme catalyses L-seryl-[protein] + ATP = O-phospho-L-seryl-[protein] + ADP + H(+). It catalyses the reaction L-threonyl-[protein] + ATP = O-phospho-L-threonyl-[protein] + ADP + H(+). This chain is Putative serine/threonine-protein kinase, found in Helianthus annuus (Common sunflower).